A 579-amino-acid chain; its full sequence is Copine-E (579 aa).

C2 domains follow at residues 45 to 175 and 183 to 304; these read IDPS…KVIG and QTGT…EFTL. Ca(2+) is bound by residues D80, D86, D145, D147, and D153. In terms of domain architecture, VWFA spans 345-552; that stretch reads NLMIAIDCTA…KKYENDPEQL (208 aa).

This sequence belongs to the copine family. Ca(2+) serves as cofactor.

The chain is Copine-E (cpnE) from Dictyostelium discoideum (Social amoeba).